The following is a 252-amino-acid chain: Hydroxyacylglutathione hydrolase (252 aa).

Residues H54, H56, D58, H59, H111, D128, and H166 each contribute to the Zn(2+) site.

Belongs to the metallo-beta-lactamase superfamily. Glyoxalase II family. As to quaternary structure, monomer. Zn(2+) serves as cofactor.

It catalyses the reaction an S-(2-hydroxyacyl)glutathione + H2O = a 2-hydroxy carboxylate + glutathione + H(+). It participates in secondary metabolite metabolism; methylglyoxal degradation; (R)-lactate from methylglyoxal: step 2/2. Thiolesterase that catalyzes the hydrolysis of S-D-lactoyl-glutathione to form glutathione and D-lactic acid. This chain is Hydroxyacylglutathione hydrolase, found in Vibrio parahaemolyticus serotype O3:K6 (strain RIMD 2210633).